Consider the following 74-residue polypeptide: Peptide Im-4 (74 aa).

Positions 1 to 22 (MKFQYLLAIFMIVLVVTDHCQA) are cleaved as a signal peptide. Residue Lys-39 is modified to Lysine amide; partial. The propeptide occupies 40–74 (GRRRRQLEARYEPQQRNFRKREIDFEKLFANMPDY).

This sequence belongs to the non-disulfide-bridged peptide (NDBP) superfamily. Short antimicrobial peptide (group 4) family. In terms of tissue distribution, expressed by the venom gland.

The protein localises to the secreted. The protein resides in the target cell membrane. In terms of biological role, antimicrobial peptide that probably forms pores in target membranes. Has antibacterial activity against Gram-positive bacteria S.aureus NBRC 13276 (MIC=5-10 uM) and B.subtilis NBRC 3009 (MIC=2.5-5 uM) but not against Gram-negative bacterium E.coli NBRC 3972. The protein is Peptide Im-4 of Isometrus maculatus (Lesser brown scorpion).